An 819-amino-acid polypeptide reads, in one-letter code: Probable cadmium/zinc-transporting ATPase HMA1, chloroplastic (819 aa).

A chloroplast-targeting transit peptide spans 1 to 17 (MEPATLTRSSSLTRFPY). The Stromal segment spans residues 18–122 (RRGLSTLRLA…IGWVRLANYL (105 aa)). The segment covering 66 to 79 (DHHHDHHHDDEQDH) has biased composition (basic and acidic residues). The segment at 66–87 (DHHHDHHHDDEQDHHNHHHHHH) is disordered. Residues 123-144 (REHLHLCCSAAAMFLAAAVCPY) traverse the membrane as a helical segment. The Lumenal portion of the chain corresponds to 145 to 153 (LAPEPYIKS). Residues 154–173 (LQNAFMIVGFPLVGVSASLD) form a helical membrane-spanning segment. Topologically, residues 174–180 (ALMDIAG) are stromal. Residues 181–201 (GKVNIHVLMALAAFASVFMGN) traverse the membrane as a helical segment. Residue Ala202 is a topological domain, lumenal. The helical transmembrane segment at 203-223 (LEGGLLLAMFNLAHIAEEFFT) threads the bilayer. The Stromal segment spans residues 224–361 (SRSMVDVKEL…KPKLQRWLDE (138 aa)). A helical transmembrane segment spans residues 362-384 (FGENYSKVVVVLSLAIAFLGPFL). At 385–398 (FKWPFLSTAACRGS) the chain is on the lumenal side. Residues 399–416 (VYRALGLMVAASPCALAV) form a helical membrane-spanning segment. Over 417–737 (APLAYATAIS…AKSRQTTSLV (321 aa)) the chain is Stromal. Asp453 functions as the 4-aspartylphosphate intermediate in the catalytic mechanism. Mg(2+)-binding residues include Glu682 and Asp686. A helical membrane pass occupies residues 738 to 757 (KQNVALALTSIFLAALPSVL). Residues 758-762 (GFVPL) lie on the Lumenal side of the membrane. Residues 763 to 781 (WLTVLLHEGGTLLVCLNSV) form a helical membrane-spanning segment. Over 782–819 (RGLNDPSWSWKQDIVHLINKLRSQEPTSSSSNSLSSAH) the chain is Stromal.

It belongs to the cation transport ATPase (P-type) (TC 3.A.3) family. Type IB subfamily.

Its subcellular location is the plastid. It localises to the chloroplast inner membrane. The catalysed reaction is Zn(2+)(in) + ATP + H2O = Zn(2+)(out) + ADP + phosphate + H(+). It carries out the reaction Cd(2+)(in) + ATP + H2O = Cd(2+)(out) + ADP + phosphate + H(+). In terms of biological role, involved in cadmium/zinc transport. The chain is Probable cadmium/zinc-transporting ATPase HMA1, chloroplastic (HMA1) from Arabidopsis thaliana (Mouse-ear cress).